We begin with the raw amino-acid sequence, 53 residues long: uncharacterized protein (53 aa).

Residues 26-46 (CYLLFCFLECFLNLFKKCGVF) form a helical membrane-spanning segment.

This sequence belongs to the plectrovirus ORF11 family.

The protein localises to the host membrane. This is an uncharacterized protein from Spiroplasma virus SpV1-R8A2 B (SpV1).